The primary structure comprises 231 residues: Large ribosomal subunit protein uL1 (231 aa).

The protein belongs to the universal ribosomal protein uL1 family. In terms of assembly, part of the 50S ribosomal subunit.

Functionally, binds directly to 23S rRNA. The L1 stalk is quite mobile in the ribosome, and is involved in E site tRNA release. Its function is as follows. Protein L1 is also a translational repressor protein, it controls the translation of the L11 operon by binding to its mRNA. The chain is Large ribosomal subunit protein uL1 from Carboxydothermus hydrogenoformans (strain ATCC BAA-161 / DSM 6008 / Z-2901).